Reading from the N-terminus, the 249-residue chain is 1-(5-phosphoribosyl)-5-[(5-phosphoribosylamino)methylideneamino] imidazole-4-carboxamide isomerase (249 aa).

Asp10 (proton acceptor) is an active-site residue. Asp131 functions as the Proton donor in the catalytic mechanism.

The protein belongs to the HisA/HisF family.

It localises to the cytoplasm. The catalysed reaction is 1-(5-phospho-beta-D-ribosyl)-5-[(5-phospho-beta-D-ribosylamino)methylideneamino]imidazole-4-carboxamide = 5-[(5-phospho-1-deoxy-D-ribulos-1-ylimino)methylamino]-1-(5-phospho-beta-D-ribosyl)imidazole-4-carboxamide. The protein operates within amino-acid biosynthesis; L-histidine biosynthesis; L-histidine from 5-phospho-alpha-D-ribose 1-diphosphate: step 4/9. The polypeptide is 1-(5-phosphoribosyl)-5-[(5-phosphoribosylamino)methylideneamino] imidazole-4-carboxamide isomerase (Brevibacillus brevis (strain 47 / JCM 6285 / NBRC 100599)).